Consider the following 692-residue polypeptide: Elongation factor G (692 aa).

One can recognise a tr-type G domain in the interval 8-283; the sequence is NRIRNIGIAA…AVIDYLPAPT (276 aa). GTP-binding positions include 17–24, 81–85, and 135–138; these read AHIDAGKT, DTPGH, and NKMD.

This sequence belongs to the TRAFAC class translation factor GTPase superfamily. Classic translation factor GTPase family. EF-G/EF-2 subfamily.

Its subcellular location is the cytoplasm. Its function is as follows. Catalyzes the GTP-dependent ribosomal translocation step during translation elongation. During this step, the ribosome changes from the pre-translocational (PRE) to the post-translocational (POST) state as the newly formed A-site-bound peptidyl-tRNA and P-site-bound deacylated tRNA move to the P and E sites, respectively. Catalyzes the coordinated movement of the two tRNA molecules, the mRNA and conformational changes in the ribosome. The protein is Elongation factor G (fusA) of Helicobacter pylori (strain J99 / ATCC 700824) (Campylobacter pylori J99).